The primary structure comprises 389 residues: 5-hydroxytryptamine receptor 1B (389 aa).

The Extracellular segment spans residues 1–45 (MGNPEASCTPPAVLGSQTGLPHANVSAPPNNCSAPSHIYQDSIAL). N-linked (GlcNAc...) asparagine glycans are attached at residues Asn-24 and Asn-31. The chain crosses the membrane as a helical span at residues 46 to 71 (PWKVLLVVLLALITLATTLSNAFVIA). Over 72 to 85 (TVYRTRKLHTPANY) the chain is Cytoplasmic. Residues 86 to 110 (LIASLAFTDLLVSILVMPISTMYTV) form a helical membrane-spanning segment. The Extracellular segment spans residues 111 to 118 (TGRWTLGQ). A helical transmembrane segment spans residues 119–144 (ALCDFWLSSDITCCTASIMHLCVIAL). A disulfide bridge links Cys-121 with Cys-198. Asp-128 and Thr-133 together coordinate ergotamine. The short motif at 145-147 (DRY) is the DRY motif; important for ligand-induced conformation changes and signaling element. At 145 to 164 (DRYWAITDAVGYSAKRTPRR) the chain is on the cytoplasmic side. Residues 165–183 (AAGMIALVWVFSICISLPP) form a helical membrane-spanning segment. Topologically, residues 184 to 204 (FFWRQAKAEEEVLDCLVNTDH) are extracellular. Val-200 is an ergotamine binding site. The chain crosses the membrane as a helical span at residues 205 to 228 (VLYTVYSTGGAFYLPTLLLIALYG). The Cytoplasmic portion of the chain corresponds to 229-314 (RIYVEARSRI…AARERKATKT (86 aa)). A helical membrane pass occupies residues 315–336 (LGVILGAFIVCWLPFFIISLVM). The Extracellular segment spans residues 337–346 (PICKDACWFH). Residues 347–369 (MAIFDFFTWLGYLNSLINPIIYT) traverse the membrane as a helical segment. Residues 364–368 (NPIIY) carry the NPxxY motif; important for ligand-induced conformation changes and signaling motif. Residues 370 to 389 (MSNEDFKQAFHKLIRFKCTT) lie on the Cytoplasmic side of the membrane. Cys-387 carries the S-palmitoyl cysteine lipid modification.

It belongs to the G-protein coupled receptor 1 family. As to quaternary structure, homodimer. Heterodimer with HTR1D. In terms of processing, phosphorylated. Desensitization of the receptor may be mediated by its phosphorylation. Post-translationally, palmitoylated.

Its subcellular location is the cell membrane. Functionally, G-protein coupled receptor for 5-hydroxytryptamine (serotonin). Also functions as a receptor for ergot alkaloid derivatives, various anxiolytic and antidepressant drugs and other psychoactive substances, such as lysergic acid diethylamide (LSD). Ligand binding causes a conformation change that triggers signaling via guanine nucleotide-binding proteins (G proteins) and modulates the activity of downstream effectors, such as adenylate cyclase. HTR1B is coupled to G(i)/G(o) G alpha proteins and mediates inhibitory neurotransmission by inhibiting adenylate cyclase activity. Arrestin family members inhibit signaling via G proteins and mediate activation of alternative signaling pathways. Regulates the release of 5-hydroxytryptamine, dopamine and acetylcholine in the brain, and thereby affects neural activity, nociceptive processing, pain perception, mood and behavior. Besides, plays a role in vasoconstriction of cerebral arteries. This is 5-hydroxytryptamine receptor 1B (HTR1B) from Cavia porcellus (Guinea pig).